Reading from the N-terminus, the 293-residue chain is Ribosomal protein L11 methyltransferase (293 aa).

S-adenosyl-L-methionine-binding residues include Thr145, Gly166, Asp188, and Asn230.

It belongs to the methyltransferase superfamily. PrmA family.

The protein resides in the cytoplasm. It catalyses the reaction L-lysyl-[protein] + 3 S-adenosyl-L-methionine = N(6),N(6),N(6)-trimethyl-L-lysyl-[protein] + 3 S-adenosyl-L-homocysteine + 3 H(+). In terms of biological role, methylates ribosomal protein L11. In Mannheimia succiniciproducens (strain KCTC 0769BP / MBEL55E), this protein is Ribosomal protein L11 methyltransferase.